A 314-amino-acid polypeptide reads, in one-letter code: MKTLTLVAPAKINFYLEILGDRPDGFHELAMVMQSIALGDRLHLRQRQGQGFQLGCDRADLEVDERNLILKAAQRLQRSFPQIGGVDFFLEKRIPIGAGLAGGSTDGAAALVGLDIFSGLGLTQPELEAIAAELGSDMPFCVAGGTQLCTSRGEQLTPLPPLPSLSLVLAKFESLSVSTPWAYGRYREQFGDRYLQTEPARRDRLQALHAGPLLQAMSAGDPVAIAQHLRNDLEAVVLPEYPQVAELRSVLGNCSGILAAQMSGSGPSVFGIAENPTAAQAAVEQVRQAIADPDLKLWVTQTISHGIQTETLLR.

Lys-11 is a catalytic residue. ATP is bound at residue 95–105 (PIGAGLAGGST). Asp-137 is an active-site residue.

Belongs to the GHMP kinase family. IspE subfamily.

It carries out the reaction 4-CDP-2-C-methyl-D-erythritol + ATP = 4-CDP-2-C-methyl-D-erythritol 2-phosphate + ADP + H(+). It participates in isoprenoid biosynthesis; isopentenyl diphosphate biosynthesis via DXP pathway; isopentenyl diphosphate from 1-deoxy-D-xylulose 5-phosphate: step 3/6. Its function is as follows. Catalyzes the phosphorylation of the position 2 hydroxy group of 4-diphosphocytidyl-2C-methyl-D-erythritol. In Synechococcus elongatus (strain ATCC 33912 / PCC 7942 / FACHB-805) (Anacystis nidulans R2), this protein is 4-diphosphocytidyl-2-C-methyl-D-erythritol kinase.